We begin with the raw amino-acid sequence, 83 residues long: Small ribosomal subunit protein eS21 (83 aa).

The protein belongs to the eukaryotic ribosomal protein eS21 family. In terms of assembly, component of the 40S small ribosomal subunit. Interacts with sta.

It is found in the cytoplasm. It localises to the cytosol. Its subcellular location is the rough endoplasmic reticulum. Functionally, may be an associated component of the ribosome rather than a core structural subunit. May act as a translation initiation factor. Has a role in regulation of cell proliferation in the hematopoietic organs and the imaginal disks of larva. The polypeptide is Small ribosomal subunit protein eS21 (RpS21) (Drosophila erecta (Fruit fly)).